The chain runs to 511 residues: Bifunctional purine biosynthesis protein PurH (511 aa).

In terms of domain architecture, MGS-like spans 1–145 (MKKRALVSVS…KNHKFVSVIV (145 aa)).

Belongs to the PurH family.

It catalyses the reaction (6R)-10-formyltetrahydrofolate + 5-amino-1-(5-phospho-beta-D-ribosyl)imidazole-4-carboxamide = 5-formamido-1-(5-phospho-D-ribosyl)imidazole-4-carboxamide + (6S)-5,6,7,8-tetrahydrofolate. The enzyme catalyses IMP + H2O = 5-formamido-1-(5-phospho-D-ribosyl)imidazole-4-carboxamide. The protein operates within purine metabolism; IMP biosynthesis via de novo pathway; 5-formamido-1-(5-phospho-D-ribosyl)imidazole-4-carboxamide from 5-amino-1-(5-phospho-D-ribosyl)imidazole-4-carboxamide (10-formyl THF route): step 1/1. It participates in purine metabolism; IMP biosynthesis via de novo pathway; IMP from 5-formamido-1-(5-phospho-D-ribosyl)imidazole-4-carboxamide: step 1/1. In Bacillus thuringiensis (strain Al Hakam), this protein is Bifunctional purine biosynthesis protein PurH.